Consider the following 206-residue polypeptide: Adenine phosphoribosyltransferase (206 aa).

The protein belongs to the purine/pyrimidine phosphoribosyltransferase family. As to quaternary structure, homodimer.

It localises to the cytoplasm. It carries out the reaction AMP + diphosphate = 5-phospho-alpha-D-ribose 1-diphosphate + adenine. The protein operates within purine metabolism; AMP biosynthesis via salvage pathway; AMP from adenine: step 1/1. Functionally, catalyzes a salvage reaction resulting in the formation of AMP, that is energically less costly than de novo synthesis. This chain is Adenine phosphoribosyltransferase, found in Burkholderia mallei (strain NCTC 10229).